We begin with the raw amino-acid sequence, 475 residues long: Exodeoxyribonuclease 7 large subunit (475 aa).

Residues 452–475 (DHGLNRSSKSKRIKSKQDDQGTLF) form a disordered region. Residues 466–475 (SKQDDQGTLF) are compositionally biased toward basic and acidic residues.

This sequence belongs to the XseA family. Heterooligomer composed of large and small subunits.

The protein localises to the cytoplasm. The catalysed reaction is Exonucleolytic cleavage in either 5'- to 3'- or 3'- to 5'-direction to yield nucleoside 5'-phosphates.. Its function is as follows. Bidirectionally degrades single-stranded DNA into large acid-insoluble oligonucleotides, which are then degraded further into small acid-soluble oligonucleotides. This chain is Exodeoxyribonuclease 7 large subunit, found in Bartonella quintana (strain Toulouse) (Rochalimaea quintana).